The sequence spans 335 residues: Biotin synthase (335 aa).

The Radical SAM core domain maps to 46-274 (YKVQLASLFS…KSKIRLSAGR (229 aa)). [4Fe-4S] cluster contacts are provided by Cys-61, Cys-65, and Cys-68. Positions 105, 137, 197, and 269 each coordinate [2Fe-2S] cluster.

The protein belongs to the radical SAM superfamily. Biotin synthase family. In terms of assembly, homodimer. [4Fe-4S] cluster is required as a cofactor. It depends on [2Fe-2S] cluster as a cofactor.

The catalysed reaction is (4R,5S)-dethiobiotin + (sulfur carrier)-SH + 2 reduced [2Fe-2S]-[ferredoxin] + 2 S-adenosyl-L-methionine = (sulfur carrier)-H + biotin + 2 5'-deoxyadenosine + 2 L-methionine + 2 oxidized [2Fe-2S]-[ferredoxin]. It functions in the pathway cofactor biosynthesis; biotin biosynthesis; biotin from 7,8-diaminononanoate: step 2/2. In terms of biological role, catalyzes the conversion of dethiobiotin (DTB) to biotin by the insertion of a sulfur atom into dethiobiotin via a radical-based mechanism. The polypeptide is Biotin synthase (Prochlorococcus marinus (strain MIT 9515)).